The sequence spans 320 residues: Reticulocalbin-2 (320 aa).

Positions methionine 1–alanine 25 are cleaved as a signal peptide. 2 consecutive EF-hand domains span residues glutamate 64–histidine 99 and tyrosine 100–aspartate 135. Residues aspartate 77, aspartate 79, aspartate 81, glutamate 88, aspartate 113, asparagine 115, aspartate 117, and glutamate 124 each coordinate Ca(2+). Threonine 140 is subject to Phosphothreonine. 4 EF-hand domains span residues phenylalanine 150–glutamate 185, methionine 189–alanine 224, tryptophan 230–glycine 265, and isoleucine 266–serine 301. Positions 167, 176, 202, 204, 206, 213, 243, 245, 247, 249, 254, 279, 281, 283, 285, and 290 each coordinate Ca(2+). The Prevents secretion from ER motif lies at histidine 317–leucine 320.

The protein belongs to the CREC family.

The protein resides in the endoplasmic reticulum lumen. Functionally, not known. Binds calcium. This Mus musculus (Mouse) protein is Reticulocalbin-2 (Rcn2).